We begin with the raw amino-acid sequence, 1122 residues long: MSSTSNENISSYVIFKSKGQHINTSYNPIDIHPIHPWIVYADSDSNIVIQNYQNNEKILNFSISQHDEEKKEQILLLQKKVPTLSALSSSASGINGTNNNNSGSNSSNNNNNNNGSLSNSPNNNNNVAFIGSTGGVDSRSASVTSIGSGGGVVTPINVNSNSNSNSPSVPTLHVIGNQTLHNRSPNNTIKLSPNSSNNDSLNNNNNNINNNSTNSNNYLNENLDKMKLGQIKFIYFYDKHTRSCKDKKPKISQNKLQNISKAQPSVGIEDYIVVVAENRIVFINYHSQRLREVKIPAFENKSPNSVEFFSNSPFVAFGGPDSMIRLWNTEKWEIEKQLAGHPKGTIVKLKAIEIEGEFLVSGGTDGFVCVWNVKTGSLATQFSKVHEIVDLSYDYVTGQVMALTQDRHIMIYDLNTLKEVSKVSCGKKEFFSIEAYYHSRFNQDLLLGMKQPAQVSFFSRSGSTKEYSIDLDALLNPSKKEKSKLYKVVQHPLQPHLLLCWLNKSVYIVSTLATSIPMQVTTFNSLSNDHTVYYPFAGYLYSSSLTNVLTCEKVQTPIQLSLNENYKLDISPSGKYLSIHAISSGNYQILEISTWKILEKGQALDVAWSGKGKDSTVDEKFGKLEKILESVDSVKKKKTLGILPSIVKSTKKEETVISKILLKTKEFNNNNVVQELLLHANEDRISGGLMLGVYHKESTNSNGTLNYGSGGSIGSGSGSGTISSGSSNLINGSVGGSSSNNSANSNNSNNNNNNNNNNSNNSNNNNNSSQPILEPPIITTGEETESKSFQLLDWWTLQPVGESLPPPLKIYWDQNQTHCAIAFTHYFFVFKLRPTFHMLCRWSLGITSAVWHNNTLFFSTHNDIQCIFPHKHESSPIILASSTGNVFPEDLYDLSSGSLSTSKPNQSFSTLPNIKPTGPISLIEVNNEGLVLLDSNYKFYCIPLTHYLLKFFILAQMEAIDLAMKCSTMVDPKYHYLMAKFLTVRGHPKECLQMNGISNFLKLQICLNNEAFETSLDIVPLITEAIKSGQSITNENNNDEEVTLSSMGKMCIEIGQRAQNKNEYPTAEKAFKLATSLEPNSAYQELALHYVFLKKMNELKELQQSISTTYPLESNLISLFLD.

The segment covering 88 to 126 (SSSASGINGTNNNNSGSNSSNNNNNNNGSLSNSPNNNNN) has biased composition (low complexity). Disordered regions lie at residues 88-131 (SSSA…AFIG) and 178-215 (QTLH…STNS). The segment covering 178-190 (QTLHNRSPNNTIK) has biased composition (polar residues). Low complexity predominate over residues 191–215 (LSPNSSNNDSLNNNNNNINNNSTNS). 3 WD repeats span residues 298–337 (FENK…IEKQ), 342–381 (PKGT…LATQ), and 383–422 (SKVH…EVSK). Residues 731 to 775 (NGSVGGSSSNNSANSNNSNNNNNNNNNNSNNSNNNNNSSQPILEP) form a disordered region.

As to quaternary structure, component of the TSET complex, a heterohexamer composed of tstA, tstB, tstC, tstD, tstE and tstF, which may act in plasma membrane turnover. tstA, tstB, tstC and tstD are likely to be the core complex members with tstE and tstF acting as associated scaffold proteins.

This is TSET complex member tstF from Dictyostelium discoideum (Social amoeba).